Consider the following 364-residue polypeptide: Fructose-bisphosphate aldolase B (364 aa).

An N-acetylalanine modification is found at alanine 2. The residue at position 13 (lysine 13) is an N6-succinyllysine. The residue at position 36 (serine 36) is a Phosphoserine. Threonine 39 bears the Phosphothreonine mark. Beta-D-fructose 1,6-bisphosphate is bound at residue arginine 43. Serine 89 bears the Phosphoserine mark. Threonine 119 is modified (phosphothreonine). N6-succinyllysine is present on lysine 121. Serine 132 is subject to Phosphoserine. Catalysis depends on glutamate 188, which acts as the Proton acceptor. The active-site Schiff-base intermediate with dihydroxyacetone-P is the lysine 230. A phosphoserine mark is found at serine 272, serine 276, serine 299, and serine 301. A beta-D-fructose 1,6-bisphosphate-binding site is contributed by 272-274 (SGG). Arginine 304 contributes to the beta-D-fructose 1,6-bisphosphate binding site. The residue at position 309 (serine 309) is a Phosphoserine. Position 317 is an N6-succinyllysine (lysine 317).

It belongs to the class I fructose-bisphosphate aldolase family. Homotetramer. Interacts with BBS1, BBS2, BBS4 and BBS7. Forms a ternary complex with G6PD and TP53; this interaction is direct.

The protein localises to the cytoplasm. It localises to the cytosol. The protein resides in the cytoskeleton. Its subcellular location is the microtubule organizing center. It is found in the centrosome. The protein localises to the centriolar satellite. It carries out the reaction beta-D-fructose 1,6-bisphosphate = D-glyceraldehyde 3-phosphate + dihydroxyacetone phosphate. The catalysed reaction is beta-D-fructose 1-phosphate = D-glyceraldehyde + dihydroxyacetone phosphate. The protein operates within carbohydrate degradation; glycolysis; D-glyceraldehyde 3-phosphate and glycerone phosphate from D-glucose: step 4/4. Its pathway is carbohydrate biosynthesis; gluconeogenesis. It participates in carbohydrate metabolism; fructose metabolism. Its function is as follows. Catalyzes the aldol cleavage of fructose 1,6-biphosphate to form two triosephosphates dihydroxyacetone phosphate and D-glyceraldehyde 3-phosphate in glycolysis as well as the reverse stereospecific aldol addition reaction in gluconeogenesis. In fructolysis, metabolizes fructose 1-phosphate derived from the phosphorylation of dietary fructose by fructokinase into dihydroxyacetone phosphate and D-glyceraldehyde. Acts as an adapter independently of its enzymatic activity, exerts a tumor suppressor role by stabilizing the ternary complex with G6PD and TP53 to inhibit G6PD activity and keep oxidative pentose phosphate metabolism in check. In Oryctolagus cuniculus (Rabbit), this protein is Fructose-bisphosphate aldolase B (ALDOB).